Here is a 457-residue protein sequence, read N- to C-terminus: Nuclear hormone receptor family member odr-7 (457 aa).

Disordered stretches follow at residues 57–95 (EQPN…DNDA) and 230–252 (KQES…LQQP). The nuclear receptor DNA-binding region spans 327–407 (LHDCQVCLST…IGMLPENVQH (81 aa)). NR C4-type zinc fingers lie at residues 330–351 (CQVC…CAAC) and 367–395 (CKRN…MKRC). The interval 435–457 (QPSGSAAQPITVSSSESPRHTTN) is disordered.

This sequence belongs to the nuclear hormone receptor family. NR0 subfamily. Heterodimer with a partner that confers DNA binding capacity or a nuclear hormone receptor whose DNA binding it inhibits. Expressed predominantly in the AWA neurons.

Its subcellular location is the nucleus. The protein localises to the cytoplasm. It localises to the perinuclear region. Functionally, required for the function of one pair of chemosensory neurons called AWA neurons that are involved in chemotaxis to volatile odorants. Acts in a pathway that specifies olfactory neuronal fate. Regulates the transcription of olfactory signaling molecules such as odr-10 that specify AWA neuron identity and function. Represses the expression in AWA neurons of factors such as str-2 which specify AWC neuron identity. The sequence is that of Nuclear hormone receptor family member odr-7 (odr-7) from Caenorhabditis elegans.